The chain runs to 31 residues: Cyclotide psybry A (31 aa).

The segment at residues 1 to 31 (GFNPCGETCIWFPTCHAPGCTCSIANICVRN) is a cross-link (cyclopeptide (Gly-Asn)). 3 disulfides stabilise this stretch: cysteine 5-cysteine 20, cysteine 9-cysteine 22, and cysteine 15-cysteine 28.

Post-translationally, this is a cyclic peptide.

Functionally, probably participates in a plant defense mechanism. The chain is Cyclotide psybry A from Psychotria brachyceras.